A 284-amino-acid chain; its full sequence is tRNA uridine(34) hydroxylase (284 aa).

In terms of domain architecture, Rhodanese spans A132 to Y226. Catalysis depends on C186, which acts as the Cysteine persulfide intermediate.

Belongs to the TrhO family.

It catalyses the reaction uridine(34) in tRNA + AH2 + O2 = 5-hydroxyuridine(34) in tRNA + A + H2O. Functionally, catalyzes oxygen-dependent 5-hydroxyuridine (ho5U) modification at position 34 in tRNAs. This Burkholderia ambifaria (strain MC40-6) protein is tRNA uridine(34) hydroxylase.